The following is a 39-amino-acid chain: Cytochrome b559 subunit beta (39 aa).

A helical membrane pass occupies residues 14 to 30 (WLAIHGLAVPTVFFLGS). Heme is bound at residue H18.

This sequence belongs to the PsbE/PsbF family. Heterodimer of an alpha subunit and a beta subunit. PSII is composed of 1 copy each of membrane proteins PsbA, PsbB, PsbC, PsbD, PsbE, PsbF, PsbH, PsbI, PsbJ, PsbK, PsbL, PsbM, PsbT, PsbX, PsbY, PsbZ, Psb30/Ycf12, at least 3 peripheral proteins of the oxygen-evolving complex and a large number of cofactors. It forms dimeric complexes. It depends on heme b as a cofactor.

It is found in the plastid. The protein localises to the chloroplast thylakoid membrane. This b-type cytochrome is tightly associated with the reaction center of photosystem II (PSII). PSII is a light-driven water:plastoquinone oxidoreductase that uses light energy to abstract electrons from H(2)O, generating O(2) and a proton gradient subsequently used for ATP formation. It consists of a core antenna complex that captures photons, and an electron transfer chain that converts photonic excitation into a charge separation. This chain is Cytochrome b559 subunit beta, found in Staurastrum punctulatum (Green alga).